Consider the following 503-residue polypeptide: ATP synthase subunit alpha (503 aa).

170–177 (GDRQTGKT) provides a ligand contact to ATP.

The protein belongs to the ATPase alpha/beta chains family. In terms of assembly, F-type ATPases have 2 components, CF(1) - the catalytic core - and CF(0) - the membrane proton channel. CF(1) has five subunits: alpha(3), beta(3), gamma(1), delta(1), epsilon(1). CF(0) has three main subunits: a(1), b(2) and c(9-12). The alpha and beta chains form an alternating ring which encloses part of the gamma chain. CF(1) is attached to CF(0) by a central stalk formed by the gamma and epsilon chains, while a peripheral stalk is formed by the delta and b chains.

It is found in the cell inner membrane. The enzyme catalyses ATP + H2O + 4 H(+)(in) = ADP + phosphate + 5 H(+)(out). Its function is as follows. Produces ATP from ADP in the presence of a proton gradient across the membrane. The alpha chain is a regulatory subunit. The sequence is that of ATP synthase subunit alpha from Thermotoga neapolitana (strain ATCC 49049 / DSM 4359 / NBRC 107923 / NS-E).